Reading from the N-terminus, the 155-residue chain is 6,7-dimethyl-8-ribityllumazine synthase (155 aa).

5-amino-6-(D-ribitylamino)uracil contacts are provided by residues Phe-26, 60-62, and 84-86; these read ALE and AVI. 89-90 is a (2S)-2-hydroxy-3-oxobutyl phosphate binding site; the sequence is ET. His-92 acts as the Proton donor in catalysis. A 5-amino-6-(D-ribitylamino)uracil-binding site is contributed by Asn-117. Arg-131 lines the (2S)-2-hydroxy-3-oxobutyl phosphate pocket.

It belongs to the DMRL synthase family.

It catalyses the reaction (2S)-2-hydroxy-3-oxobutyl phosphate + 5-amino-6-(D-ribitylamino)uracil = 6,7-dimethyl-8-(1-D-ribityl)lumazine + phosphate + 2 H2O + H(+). Its pathway is cofactor biosynthesis; riboflavin biosynthesis; riboflavin from 2-hydroxy-3-oxobutyl phosphate and 5-amino-6-(D-ribitylamino)uracil: step 1/2. In terms of biological role, catalyzes the formation of 6,7-dimethyl-8-ribityllumazine by condensation of 5-amino-6-(D-ribitylamino)uracil with 3,4-dihydroxy-2-butanone 4-phosphate. This is the penultimate step in the biosynthesis of riboflavin. This Chromobacterium violaceum (strain ATCC 12472 / DSM 30191 / JCM 1249 / CCUG 213 / NBRC 12614 / NCIMB 9131 / NCTC 9757 / MK) protein is 6,7-dimethyl-8-ribityllumazine synthase.